The chain runs to 1047 residues: Suppression of tumorigenicity 18 protein (1047 aa).

Disordered stretches follow at residues 41–92 (TAED…HSTA), 168–221 (FLIH…VPKY), and 251–286 (DSET…SESL). The span at 52 to 65 (NKRKSLLMKPRHYS) shows a compositional bias: basic residues. Positions 171 to 181 (HSDDGRDKIDD) are enriched in basic and acidic residues. 2 consecutive CCHHC-type zinc fingers follow at residues 359–402 (PRPE…PLEI) and 403–446 (LAMH…KLAM). The Zn(2+) site is built by Cys-368, Cys-373, His-386, Cys-392, Cys-412, Cys-417, His-430, and Cys-436. Disordered stretches follow at residues 523–563 (GRKT…SYSY) and 672–710 (YSKT…SPKP). Residues 550–563 (AHTQSPGRASSYSY) show a composition bias toward polar residues. Over residues 677–687 (GKTEEEKEKDP) the composition is skewed to basic and acidic residues. 4 consecutive CCHHC-type zinc fingers follow at residues 715 to 758 (RDLK…LKSL), 759 to 802 (MAAN…GVKM), 807 to 850 (EEKE…QKEN), and 860 to 903 (KLNK…IKKG). Positions 724, 729, 742, 748, 768, 773, 786, 792, 816, 821, 834, 840, 869, 874, 887, and 893 each coordinate Zn(2+). The stretch at 920–992 (IESDEEIRHL…AGLSQALISS (73 aa)) forms a coiled coil.

This sequence belongs to the MYT1 family. Detected at low levels in heart, liver, kidney, skeletal muscle, pancreas, testis, ovary and prostate. Detected at even lower levels in mammary epithelial cells and breast cancer cells.

The protein resides in the nucleus. In terms of biological role, repressor that binds to DNA sequences containing a bipartite element consisting of a direct repeat of the sequence 5'-AAAGTTT-3' separated by 2-9 nucleotides. Represses basal transcription activity from target promoters. Inhibits colony formation in cultured breast cancer cells. The polypeptide is Suppression of tumorigenicity 18 protein (ST18) (Homo sapiens (Human)).